A 215-amino-acid polypeptide reads, in one-letter code: NADH-quinone oxidoreductase subunit C (215 aa).

It belongs to the complex I 30 kDa subunit family. NDH-1 is composed of 14 different subunits. Subunits NuoB, C, D, E, F, and G constitute the peripheral sector of the complex.

It localises to the cell inner membrane. The enzyme catalyses a quinone + NADH + 5 H(+)(in) = a quinol + NAD(+) + 4 H(+)(out). NDH-1 shuttles electrons from NADH, via FMN and iron-sulfur (Fe-S) centers, to quinones in the respiratory chain. The immediate electron acceptor for the enzyme in this species is believed to be ubiquinone. Couples the redox reaction to proton translocation (for every two electrons transferred, four hydrogen ions are translocated across the cytoplasmic membrane), and thus conserves the redox energy in a proton gradient. In Francisella philomiragia subsp. philomiragia (strain ATCC 25017 / CCUG 19701 / FSC 153 / O#319-036), this protein is NADH-quinone oxidoreductase subunit C.